A 439-amino-acid chain; its full sequence is Xylose isomerase (439 aa).

Active-site residues include His-103 and Asp-106. 7 residues coordinate Mg(2+): Glu-234, Glu-270, His-273, Asp-298, Asp-309, Asp-311, and Asp-341.

Belongs to the xylose isomerase family. As to quaternary structure, homotetramer. Requires Mg(2+) as cofactor.

Its subcellular location is the cytoplasm. It catalyses the reaction alpha-D-xylose = alpha-D-xylulofuranose. This chain is Xylose isomerase, found in Bacteroides fragilis (strain YCH46).